The primary structure comprises 261 residues: Sepiapterin reductase (261 aa).

Position 1 is an N-acetylmethionine (M1). 14–20 provides a ligand contact to NADP(+); it reads GASRGFG. At S32 the chain carries Phosphoserine. NADP(+)-binding positions include 42–43 and 69–70; these read RN and DL. Position 103 is a phosphoserine (S103). Substrate is bound by residues 157–158 and Y170; that span reads SL. K174 is an NADP(+) binding site. G199 provides a ligand contact to substrate. 201–206 contacts NADP(+); sequence LDTDMQ. S213 is modified (phosphoserine; by CaMK2; in vitro). D257 serves as a coordination point for substrate.

The protein belongs to the sepiapterin reductase family. Homodimer. In vitro phosphorylation of Ser-213 by CaMK2 does not change kinetic parameters.

It localises to the cytoplasm. It catalyses the reaction L-erythro-7,8-dihydrobiopterin + NADP(+) = L-sepiapterin + NADPH + H(+). The enzyme catalyses (6R)-L-erythro-5,6,7,8-tetrahydrobiopterin + 2 NADP(+) = 6-pyruvoyl-5,6,7,8-tetrahydropterin + 2 NADPH + 2 H(+). Functionally, catalyzes the final one or two reductions in tetra-hydrobiopterin biosynthesis to form 5,6,7,8-tetrahydrobiopterin. The sequence is that of Sepiapterin reductase (SPR) from Homo sapiens (Human).